The primary structure comprises 121 residues: Large ribosomal subunit protein bL19 (121 aa).

Belongs to the bacterial ribosomal protein bL19 family.

This protein is located at the 30S-50S ribosomal subunit interface and may play a role in the structure and function of the aminoacyl-tRNA binding site. The protein is Large ribosomal subunit protein bL19 of Legionella pneumophila (strain Paris).